The chain runs to 354 residues: DNA polymerase IV (354 aa).

The region spanning 6 to 187 is the UmuC domain; sequence IIHIDCDCFY…LPVTKLHGVG (182 aa). Asp-10 and Asp-105 together coordinate Mg(2+). Residue Glu-106 is part of the active site.

Belongs to the DNA polymerase type-Y family. As to quaternary structure, monomer. The cofactor is Mg(2+).

It is found in the cytoplasm. The enzyme catalyses DNA(n) + a 2'-deoxyribonucleoside 5'-triphosphate = DNA(n+1) + diphosphate. Poorly processive, error-prone DNA polymerase involved in untargeted mutagenesis. Copies undamaged DNA at stalled replication forks, which arise in vivo from mismatched or misaligned primer ends. These misaligned primers can be extended by PolIV. Exhibits no 3'-5' exonuclease (proofreading) activity. May be involved in translesional synthesis, in conjunction with the beta clamp from PolIII. The protein is DNA polymerase IV of Pseudomonas syringae pv. syringae (strain B728a).